The chain runs to 473 residues: GTPase Der (473 aa).

2 EngA-type G domains span residues 3–167 (LTIA…GKDK) and 204–379 (IRIA…RIWN). GTP contacts are provided by residues 9 to 16 (GRPNVGKS), 56 to 60 (DTAGL), 119 to 122 (NKSE), 210 to 217 (GRPNTGKS), 257 to 261 (DTAGL), and 322 to 325 (NKWD). The KH-like domain maps to 380-464 (RRISTGKLNR…PIRLSLRTSD (85 aa)).

Belongs to the TRAFAC class TrmE-Era-EngA-EngB-Septin-like GTPase superfamily. EngA (Der) GTPase family. Associates with the 50S ribosomal subunit.

Its function is as follows. GTPase that plays an essential role in the late steps of ribosome biogenesis. This is GTPase Der from Bartonella bacilliformis (strain ATCC 35685 / KC583 / Herrer 020/F12,63).